A 470-amino-acid polypeptide reads, in one-letter code: Solute carrier family 7 member 13 (470 aa).

Over 1 to 11 (MDRGEKIQLKR) the chain is Cytoplasmic. A helical membrane pass occupies residues 12-32 (VFGYWWGTSFLLINIIGAGIF). The Extracellular portion of the chain corresponds to 33-45 (VSPKGVLAYSCMN). A helical transmembrane segment spans residues 46 to 66 (VGVSLCVWAGCAILAMTSTLC). At 67–87 (SAEISISFPCSGAQYYFLKRY) the chain is on the cytoplasmic side. Residues 88 to 108 (FGSTVAFLNLWTSLFLGSGVV) form a helical membrane-spanning segment. The Extracellular segment spans residues 109–128 (AGQALLLAEYSIQPFFPSCS). The chain crosses the membrane as a helical span at residues 129–149 (VPKLPKKCLALAMLWIVGILT). Over 150–162 (SRGVKEVTWLQIA) the chain is Cytoplasmic. The chain crosses the membrane as a helical span at residues 163 to 183 (SSVLKVSILSFISLTGVVFLI). Over 184–206 (RGKKENVERFQNAFDAELPDISH) the chain is Extracellular. A helical membrane pass occupies residues 207 to 227 (LIQAIFQGYFAYSGGACFTLI). At 228-240 (AGELKKPRTTIPK) the chain is on the cytoplasmic side. Residues 241 to 261 (CIFTALPLVTVVYLLVNISYL) traverse the membrane as a helical segment. At 262–287 (TVLTPREILSSDAVAITWADRAFPSL) the chain is on the extracellular side. The helical transmembrane segment at 288–308 (AWIMPFAISTSLFSNLLISIF) threads the bilayer. At 309–336 (KSSRPIYLASQEGQLPLLFNTLNSHSSP) the chain is on the cytoplasmic side. The helical transmembrane segment at 337–357 (FTAVLLLVTLGSLAIILTSLI) threads the bilayer. Residue Asp358 is a topological domain, extracellular. A helical transmembrane segment spans residues 359 to 379 (LINYIFFTGSLWSILLMIGIL). Over 380–393 (RRRYQEPNLSIPYK) the chain is Cytoplasmic. Residues 394–414 (VFLSFPLATIVIDVGLVVIPL) traverse the membrane as a helical segment. Residues 415–421 (VKSPNVH) are Extracellular-facing. The helical transmembrane segment at 422 to 442 (YVYVLLLVLSGLLFYIPLIHF) threads the bilayer. Residues 443-470 (KIRLAWFEKMTCYLQLLFNICLPDVSEE) lie on the Cytoplasmic side of the membrane.

It belongs to the amino acid-polyamine-organocation (APC) superfamily. As to quaternary structure, disulfide-linked heterodimer composed of the catalytic light subunit SLC7A13 and the heavy subunit SLC3A1. In terms of tissue distribution, expressed in the kidney.

It is found in the apical cell membrane. The enzyme catalyses L-cystine(out) + L-aspartate(in) = L-cystine(in) + L-aspartate(out). It catalyses the reaction L-cystine(out) = L-cystine(in). The catalysed reaction is L-aspartate(in) + L-glutamate(out) = L-aspartate(out) + L-glutamate(in). It carries out the reaction L-aspartate(in) + L-glutamine(out) = L-aspartate(out) + L-glutamine(in). The enzyme catalyses L-aspartate(in) + L-methionine(out) = L-aspartate(out) + L-methionine(in). It catalyses the reaction L-leucine(out) + L-aspartate(in) = L-leucine(in) + L-aspartate(out). The catalysed reaction is L-valine(out) + L-aspartate(in) = L-valine(in) + L-aspartate(out). It carries out the reaction L-aspartate(in) + L-phenylalanine(out) = L-aspartate(out) + L-phenylalanine(in). The enzyme catalyses L-tyrosine(out) + L-aspartate(in) = L-tyrosine(in) + L-aspartate(out). It catalyses the reaction L-tryptophan(out) + L-aspartate(in) = L-tryptophan(in) + L-aspartate(out). In terms of biological role, associates with SLC3A1/rBAT to form a functional heterodimeric complex that transports anionic and neutral amino acids across the apical plasma membrane of renal epithelium. Preferentially mediates exchange transport, but can also operate via facilitated diffusion. May act as a major transporter for L-cystine in late proximal tubules, ensuring its reabsorption from the luminal fluid in exchange for cytosolic L-glutamate or L-aspartate. The chain is Solute carrier family 7 member 13 (SLC7A13) from Homo sapiens (Human).